The primary structure comprises 217 residues: Small ribosomal subunit protein uS3 (217 aa).

The region spanning 38-106 is the KH type-2 domain; sequence IRKFIDNELK…KVHINVIEIK (69 aa).

This sequence belongs to the universal ribosomal protein uS3 family. Part of the 30S ribosomal subunit. Forms a tight complex with proteins S10 and S14.

Binds the lower part of the 30S subunit head. Binds mRNA in the 70S ribosome, positioning it for translation. This Staphylococcus aureus (strain MSSA476) protein is Small ribosomal subunit protein uS3.